Here is a 1134-residue protein sequence, read N- to C-terminus: Error-prone DNA polymerase (1134 aa).

Residues 1–33 form a disordered region; sequence MSYHNPPIPWRELEGRISGRPAPHGHQESHADQ.

Belongs to the DNA polymerase type-C family. DnaE2 subfamily.

The protein resides in the cytoplasm. It carries out the reaction DNA(n) + a 2'-deoxyribonucleoside 5'-triphosphate = DNA(n+1) + diphosphate. Functionally, DNA polymerase involved in damage-induced mutagenesis and translesion synthesis (TLS). It is not the major replicative DNA polymerase. The chain is Error-prone DNA polymerase from Cutibacterium acnes (strain DSM 16379 / KPA171202) (Propionibacterium acnes).